A 297-amino-acid polypeptide reads, in one-letter code: N-acetylneuraminate lyase (297 aa).

The aceneuramate site is built by serine 47 and threonine 48. Tyrosine 137 acts as the Proton donor in catalysis. The active-site Schiff-base intermediate with substrate is the lysine 165. Aceneuramate-binding residues include threonine 167, glycine 189, aspartate 191, glutamate 192, and serine 208.

This sequence belongs to the DapA family. NanA subfamily. As to quaternary structure, homotetramer.

It is found in the cytoplasm. The catalysed reaction is aceneuramate = aldehydo-N-acetyl-D-mannosamine + pyruvate. It participates in amino-sugar metabolism; N-acetylneuraminate degradation; D-fructose 6-phosphate from N-acetylneuraminate: step 1/5. In terms of biological role, catalyzes the reversible aldol cleavage of N-acetylneuraminic acid (sialic acid; Neu5Ac) to form pyruvate and N-acetylmannosamine (ManNAc) via a Schiff base intermediate. The polypeptide is N-acetylneuraminate lyase (Salmonella typhimurium (strain LT2 / SGSC1412 / ATCC 700720)).